We begin with the raw amino-acid sequence, 263 residues long: tRNA pseudouridine synthase A (263 aa).

The active-site Nucleophile is Asp-51. Tyr-106 serves as a coordination point for substrate.

The protein belongs to the tRNA pseudouridine synthase TruA family.

It catalyses the reaction uridine(38/39/40) in tRNA = pseudouridine(38/39/40) in tRNA. Its function is as follows. Formation of pseudouridine at positions 38, 39 and 40 in the anticodon stem and loop of transfer RNAs. This Pyrococcus abyssi (strain GE5 / Orsay) protein is tRNA pseudouridine synthase A.